A 364-amino-acid polypeptide reads, in one-letter code: Chorismate synthase (364 aa).

The disordered stretch occupies residues 41 to 60; that stretch reads MQHDLDRRRPGTSRYTTARR. Residues arginine 48 and arginine 54 each coordinate NADP(+). Residues 125–127, 238–239, glycine 278, 293–297, and arginine 319 contribute to the FMN site; these read RSS, NA, and KPTSS.

The protein belongs to the chorismate synthase family. As to quaternary structure, homotetramer. The cofactor is FMNH2.

It catalyses the reaction 5-O-(1-carboxyvinyl)-3-phosphoshikimate = chorismate + phosphate. Its pathway is metabolic intermediate biosynthesis; chorismate biosynthesis; chorismate from D-erythrose 4-phosphate and phosphoenolpyruvate: step 7/7. Catalyzes the anti-1,4-elimination of the C-3 phosphate and the C-6 proR hydrogen from 5-enolpyruvylshikimate-3-phosphate (EPSP) to yield chorismate, which is the branch point compound that serves as the starting substrate for the three terminal pathways of aromatic amino acid biosynthesis. This reaction introduces a second double bond into the aromatic ring system. This is Chorismate synthase from Shewanella baltica (strain OS185).